Reading from the N-terminus, the 258-residue chain is 5'-nucleotidase SurE (258 aa).

The a divalent metal cation site is built by Asp8, Asp9, Ser39, and Asn95.

This sequence belongs to the SurE nucleotidase family. It depends on a divalent metal cation as a cofactor.

The protein localises to the cytoplasm. It carries out the reaction a ribonucleoside 5'-phosphate + H2O = a ribonucleoside + phosphate. In terms of biological role, nucleotidase that shows phosphatase activity on nucleoside 5'-monophosphates. This is 5'-nucleotidase SurE from Methanobrevibacter smithii (strain ATCC 35061 / DSM 861 / OCM 144 / PS).